A 466-amino-acid chain; its full sequence is tRNA modification GTPase MnmE (466 aa).

3 residues coordinate (6S)-5-formyl-5,6,7,8-tetrahydrofolate: Arg-24, Glu-85, and Lys-128. The 161-residue stretch at 224–384 (GLNIVLAGQP…LRTELLHLVG (161 aa)) folds into the TrmE-type G domain. A K(+)-binding site is contributed by Asn-234. GTP-binding positions include 234–239 (NVGKSS), 253–259 (TPIAGTT), and 278–281 (DTAG). Ser-238 lines the Mg(2+) pocket. K(+) contacts are provided by Thr-253, Ile-255, and Thr-258. Thr-259 is a binding site for Mg(2+). Lys-466 lines the (6S)-5-formyl-5,6,7,8-tetrahydrofolate pocket.

Belongs to the TRAFAC class TrmE-Era-EngA-EngB-Septin-like GTPase superfamily. TrmE GTPase family. Homodimer. Heterotetramer of two MnmE and two MnmG subunits. K(+) serves as cofactor.

Its subcellular location is the cytoplasm. Its function is as follows. Exhibits a very high intrinsic GTPase hydrolysis rate. Involved in the addition of a carboxymethylaminomethyl (cmnm) group at the wobble position (U34) of certain tRNAs, forming tRNA-cmnm(5)s(2)U34. The sequence is that of tRNA modification GTPase MnmE from Herminiimonas arsenicoxydans.